Reading from the N-terminus, the 261-residue chain is Leucine-rich repeat-containing protein 61 (261 aa).

LRR repeat units follow at residues 54–75, 76–97, and 98–119; these read GLEW…ASLR, QLAV…AACE, and NLQC…QCLA. Residues 138–183 enclose the LRRCT domain; sequence NPLCASPCYWASVRELLPGLKVLDGERVSGRGSDFYQLCRDLDSSL.

This is Leucine-rich repeat-containing protein 61 (LRRC61) from Bos taurus (Bovine).